The sequence spans 268 residues: GTP cyclohydrolase III (268 aa).

It belongs to the archaeal-type GTP cyclohydrolase family. In terms of assembly, homotrimer. It depends on Mg(2+) as a cofactor.

The enzyme catalyses GTP + 3 H2O = 2-amino-5-formylamino-6-(5-phospho-D-ribosylamino)pyrimidin-4(3H)-one + 2 phosphate + 2 H(+). In terms of biological role, catalyzes the formation of 2-amino-5-formylamino-6-ribofuranosylamino-4(3H)-pyrimidinone ribonucleotide monophosphate and inorganic phosphate from GTP. Also has an independent pyrophosphate phosphohydrolase activity. In Methanocaldococcus jannaschii (strain ATCC 43067 / DSM 2661 / JAL-1 / JCM 10045 / NBRC 100440) (Methanococcus jannaschii), this protein is GTP cyclohydrolase III (gch3).